Here is a 431-residue protein sequence, read N- to C-terminus: Urokinase-type plasminogen activator (431 aa).

The signal sequence occupies residues 1–20 (MRALLARLLLCVLVVSDSKG). An EGF-like domain is found at 27–63 (VPSNCDCLNGGTCVSNKYFSNIHWCNCPKKFGGQHCE). 6 disulfide bridges follow: cysteine 31/cysteine 39, cysteine 33/cysteine 51, cysteine 53/cysteine 62, cysteine 70/cysteine 151, cysteine 91/cysteine 133, and cysteine 122/cysteine 146. Residues 34–57 (LNGGTCVSNKYFSNIHWCNCPKKF) form a binds urokinase plasminogen activator surface receptor region. One can recognise a Kringle domain in the interval 69 to 151 (TCYEGNGHFY…LVQECMVHDC (83 aa)). The interval 152-178 (ADGKKPSSPPEELKFQCGQKTLRPRFK) is connecting peptide. Serine 158 carries the phosphoserine modification. Intrachain disulfides connect cysteine 168–cysteine 299, cysteine 209–cysteine 225, cysteine 217–cysteine 288, cysteine 313–cysteine 382, cysteine 345–cysteine 361, and cysteine 372–cysteine 400. Residues 179 to 424 (IVGGEFTTIE…FLPWIRSHTK (246 aa)) enclose the Peptidase S1 domain. Active-site charge relay system residues include histidine 224 and aspartate 275. N-linked (GlcNAc...) asparagine glycosylation is present at asparagine 322. Serine 323 is modified (phosphoserine). The active-site Charge relay system is the serine 376.

The protein belongs to the peptidase S1 family. As to quaternary structure, found in high and low molecular mass forms. Each consists of two chains, A and B. The high molecular mass form contains a long chain A which is cleaved to yield a short chain A. Forms heterodimer with SERPINA5. Binds LRP1B; binding is followed by internalization and degradation. Interacts with MRC2. Interacts with PLAUR. In complex with SERPINE1, interacts with PLAUR/uPAR. Interacts with SORL1 and LRP1, either alone or in complex with SERPINE1; these interactions are abolished in the presence of LRPAP1/RAP. The ternary complex composed of PLAUR-PLAU-PAI1 also interacts with SORLA. Post-translationally, phosphorylation of Ser-158 and Ser-323 abolishes proadhesive ability but does not interfere with receptor binding. Produced as an inactive single-chain protein (pro-uPA or sc-uPA), is processed into the active disulfide-linked two-chain form of PLAU/uPA by a proteolytic event mediated, at least, by TMPRSS4.

It localises to the secreted. The catalysed reaction is Specific cleavage of Arg-|-Val bond in plasminogen to form plasmin.. Inhibited by SERPINA5. Inhibited by SERPINE1. Specifically cleaves the zymogen plasminogen to form the active enzyme plasmin. The polypeptide is Urokinase-type plasminogen activator (PLAU) (Pongo abelii (Sumatran orangutan)).